A 505-amino-acid polypeptide reads, in one-letter code: Catalase (505 aa).

The segment at 1-25 is disordered; the sequence is MSQQDKKLTGVFGHPVSDRENSMTA. Catalysis depends on residues His-56 and Asn-129. Tyr-339 is a binding site for heme.

The protein belongs to the catalase family. In terms of assembly, homodimer. It depends on heme as a cofactor.

It carries out the reaction 2 H2O2 = O2 + 2 H2O. Functionally, decomposes hydrogen peroxide into water and oxygen; serves to protect cells from the toxic effects of hydrogen peroxide. In Staphylococcus aureus (strain MSSA476), this protein is Catalase (katA).